Here is a 317-residue protein sequence, read N- to C-terminus: Sulfate adenylyltransferase subunit 2 (317 aa).

Disordered stretches follow at residues 1–22 (MPDSRPDTELSNPQSTKPPLDP) and 298–317 (RAIDRDQSGSMEKKKREGYF).

This sequence belongs to the PAPS reductase family. CysD subfamily. As to quaternary structure, heterodimer composed of CysD, the smaller subunit, and CysN.

It carries out the reaction sulfate + ATP + H(+) = adenosine 5'-phosphosulfate + diphosphate. The protein operates within sulfur metabolism; hydrogen sulfide biosynthesis; sulfite from sulfate: step 1/3. In terms of biological role, with CysN forms the ATP sulfurylase (ATPS) that catalyzes the adenylation of sulfate producing adenosine 5'-phosphosulfate (APS) and diphosphate, the first enzymatic step in sulfur assimilation pathway. APS synthesis involves the formation of a high-energy phosphoric-sulfuric acid anhydride bond driven by GTP hydrolysis by CysN coupled to ATP hydrolysis by CysD. In Rhizobium tropici, this protein is Sulfate adenylyltransferase subunit 2 (cysD).